Reading from the N-terminus, the 194-residue chain is uncharacterized protein (194 aa).

Residues 77-92 are compositionally biased toward polar residues; it reads QTQPQHQTLSQHLPQT. The tract at residues 77-96 is disordered; sequence QTQPQHQTLSQHLPQTHHTD. Residues 169–189 traverse the membrane as a helical segment; the sequence is FWEILLLIILIAVLVYGIYWL.

It localises to the host membrane. The protein localises to the virion. This is an uncharacterized protein from Acanthamoeba polyphaga (Amoeba).